A 284-amino-acid chain; its full sequence is Pheromone-regulated membrane protein 4 (284 aa).

A helical transmembrane segment spans residues isoleucine 20–tryptophan 38. The Glutaredoxin domain maps to arginine 157–asparagine 272.

It localises to the membrane. The polypeptide is Pheromone-regulated membrane protein 4 (PRM4) (Saccharomyces cerevisiae (strain ATCC 204508 / S288c) (Baker's yeast)).